The chain runs to 641 residues: MSTGAQTKAAAASQHADGPRLLADVGGTNARFALETGPGEITQIRVYPGAEYPTLTDAIRKYLKDAKIGRVNHAAIAIANPVDGDQVRMTNHNWSFSIEATRRALGFDTLLVVNDFTALAMALPGLTDAQRVQIGGGTRRQNSVIGLMGPGTGLGVSGLIPADDRWIALGSEGGHATFAPMDEREDLVLQYARRKYPHVSFERVCAGPGMEIIYRALAARDKKRIAANVDTADIVERAHAGDALALEAVECFCAILGTFAGNLAVTLGALGGIYIGGGVVPKLGELFMRSPFRARFEAKGRFEAYLANIPTYLITAEYPAFLGVSAILAEQLSNRTGGASSAVFERIRQMRDALTPAERRVADLALNHPRSIINDPIVNIARKADVSQPTVIRFCRSLGCQGLSDFKLKLATGLTGTIPMSHSQVHLGDTATDFGAKVLDNTVSAILQLREHLNFEHVEQAIDILNNARRIEFYGLGNSNIVAQDAHYKFFRFGIPTIAYGDLYMQAASAALLGKGDVIVAVSKSGRAPELLRVLDVAMQAGAKVIAITSSNTPLAKRATVALETDHIEMRESQLSMISRILHLVMIDILAVGVAIRRAAPNAELAEAMARAKARAGASAGDEAADVLDWLSHGAAPAAKD.

The glucokinase stretch occupies residues 1–340; it reads MSTGAQTKAA…QLSNRTGGAS (340 aa). 23-28 lines the ATP pocket; it reads ADVGGT. The HTH rpiR-type domain occupies 341–417; sequence SAVFERIRQM…LKLATGLTGT (77 aa). Residues 341–641 form a putative HTH-type transcriptional regulator region; that stretch reads SAVFERIRQM…SHGAAPAAKD (301 aa). The H-T-H motif DNA-binding region spans 377–396; sequence IVNIARKADVSQPTVIRFCR. The 140-residue stretch at 461 to 600 folds into the SIS domain; that stretch reads AIDILNNARR…AVGVAIRRAA (140 aa). A helical membrane pass occupies residues 576 to 596; that stretch reads SMISRILHLVMIDILAVGVAI.

This sequence in the N-terminal section; belongs to the bacterial glucokinase family.

The protein resides in the membrane. The enzyme catalyses D-glucose + ATP = D-glucose 6-phosphate + ADP + H(+). In Burkholderia mallei (strain ATCC 23344), this protein is Bifunctional protein glk (glk).